Consider the following 102-residue polypeptide: Large ribosomal subunit protein bL21 (102 aa).

Belongs to the bacterial ribosomal protein bL21 family. As to quaternary structure, part of the 50S ribosomal subunit. Contacts protein L20.

In terms of biological role, this protein binds to 23S rRNA in the presence of protein L20. The polypeptide is Large ribosomal subunit protein bL21 (Ehrlichia chaffeensis (strain ATCC CRL-10679 / Arkansas)).